Consider the following 310-residue polypeptide: ADP-L-glycero-D-manno-heptose-6-epimerase (310 aa).

Residues 10–11 (FI), 31–32 (DN), lysine 38, lysine 53, 75–79 (EGACS), and asparagine 92 each bind NADP(+). Tyrosine 140 (proton acceptor) is an active-site residue. NADP(+) is bound at residue lysine 144. Asparagine 169 lines the substrate pocket. Residues valine 170 and lysine 178 each coordinate NADP(+). Lysine 178 (proton acceptor) is an active-site residue. Substrate contacts are provided by residues serine 180, histidine 187, 201–204 (FEGS), arginine 209, and tyrosine 272.

The protein belongs to the NAD(P)-dependent epimerase/dehydratase family. HldD subfamily. As to quaternary structure, homopentamer. NADP(+) serves as cofactor.

The enzyme catalyses ADP-D-glycero-beta-D-manno-heptose = ADP-L-glycero-beta-D-manno-heptose. Its pathway is nucleotide-sugar biosynthesis; ADP-L-glycero-beta-D-manno-heptose biosynthesis; ADP-L-glycero-beta-D-manno-heptose from D-glycero-beta-D-manno-heptose 7-phosphate: step 4/4. In terms of biological role, catalyzes the interconversion between ADP-D-glycero-beta-D-manno-heptose and ADP-L-glycero-beta-D-manno-heptose via an epimerization at carbon 6 of the heptose. This chain is ADP-L-glycero-D-manno-heptose-6-epimerase, found in Klebsiella pneumoniae subsp. pneumoniae (strain ATCC 700721 / MGH 78578).